Reading from the N-terminus, the 118-residue chain is UPF0342 protein ABC1519 (118 aa).

This sequence belongs to the UPF0342 family.

The chain is UPF0342 protein ABC1519 from Shouchella clausii (strain KSM-K16) (Alkalihalobacillus clausii).